The following is a 153-amino-acid chain: MTTQVRKNVMDMFIDGARRGFTIATTNLLPNVVMAFVIIQALKITGLLDWVGHICEPVMALWGLPGEAATVLLAALMSMGGAVGVAASLATAGALTGHDVTVLLPAMYLMGNPVQNVGRCLGTAEVNAKYYPHIITVCVINALLSIWVMQLIV.

The Periplasmic portion of the chain corresponds to 1-31 (MTTQVRKNVMDMFIDGARRGFTIATTNLLPN). Residues 32–52 (VVMAFVIIQALKITGLLDWVG) form a helical membrane-spanning segment. Topologically, residues 53-68 (HICEPVMALWGLPGEA) are cytoplasmic. A run of 2 helical transmembrane segments spans residues 69 to 89 (ATVL…AASL) and 90 to 110 (ATAG…MYLM). Over 111-132 (GNPVQNVGRCLGTAEVNAKYYP) the chain is Cytoplasmic. A helical membrane pass occupies residues 133–153 (HIITVCVINALLSIWVMQLIV).

This sequence belongs to the SpmB family.

The protein resides in the cell inner membrane. The protein is Inner membrane protein YjiG (yjiG) of Escherichia coli O157:H7.